We begin with the raw amino-acid sequence, 1300 residues long: MEEASLCLGVSSAEPEAEPHLSGPVLNGQYAMSQKLHQITSQLSHAFPELHPRPNPEEKPPASLEEKAHVPMSGQPMGSQMALLANQLGREVDTSLNGRVDLQQFLNGQNLGIMSQMSDIEDDARKNRKYPCPLCGKRFRFNSILSLHMRTHTGEKPFKCPYCDHRAAQKGNLKIHLRTHKLGNLGKGRGRVREENRLLHELEERAILRDKQLKGSLLQPRPDLKPPPHAQQAPLAACTLALQANHSVPDVAHPVPSPKPASVQEDAVAPAAGFRCTFCKGKFKKREELDRHIRILHKPYKCTLCDFAASQEEELISHVEKAHITAESAQGQGPNGGGEQSANEFRCEVCGQVFSQAWFLKGHMRKHKDSFEHCCQICGRRFKEPWFLKNHMKVHLNKLSVKNKSPSDPEVPVPMGGMSQEAHANLYSRYLSCLQSGFMTPDKAGLSEPSQLYGKGELPMKEKEALGKLLSPISSMAHGVPEGDKHSLLGCLNLVPPLKSSCIERLQAAAKAAEMDPVNSYQAWQLMARGMAMEHGFLSKEHPLQRNHEDTLANAGVLFDKEKREYVLVGADGSKQKMPADLVHSTKVGSQRDLPSKLDPLESSRDFLSHGLNQTLEYNLQGPGNMKEKPTECPDCGRVFRTYHQVVVHSRVHKRDRKGEEDGLHVGLDERRGSGSDQESQSVSRSTTPGSSNVTEESGVGGGLSQTGSAQEDSPHPSSPSSSDIGEEAGRSAGVQQPALLRDRSLGSAMKDCPYCGKTFRTSHHLKVHLRIHTGEKPYKCPHCDYAGTQSASLKYHLERHHRERQNGAGPLSGQPPNQDHKDEMSSKASLFIRPDILRGAFKGLPGIDFRGGPASQQWTSGVLSSGDHSGQATGMSSEVPSDALKGTDLPSKSTHFSEIGRAYQSIVSNGVNFQGSLQAFMDSFVLSSLKKEKDMKDKALADPPSMKVHGVDGGEEKPSGKSSQRKSEKSQYEPLDLSVRPDAASLPGSSVTVQDSIAWHGCLFCAFTTSSMELMALHLQANHLGKAKRKDNTIGVTVNCKDQAREASKMALLPSLQSNKDLGLSNMISSLDSASEKMAQGQLKETLGEQKSGAWTGHVDPAFCNFPSDFYKQFGVYPGMVGSGASSSCPNKEPDGKAHSEEDVPILIPETTSKNTTDDLSDIASSEDMDSSKGENNDEEDVETEPEMMTKPLSALSKDSSSDGGDSLQPTGTSQPVQGLVSPLSQAPEKQWHSQGLLQAQDPLAGLPKPERGPQSLDKPMNMLSVLRAYSSDGLAAFNGLASSTANSGCIKRPDLCGK.

Disordered stretches follow at residues 1-26 (MEEA…GPVL) and 47-77 (FPEL…GQPM). A compositionally biased stretch (basic and acidic residues) spans 48–69 (PELHPRPNPEEKPPASLEEKAH). C2H2-type zinc fingers lie at residues 130 to 152 (YPCP…MRTH), 158 to 180 (FKCP…LRTH), 274 to 297 (FRCT…RILH), 300 to 323 (YKCT…EKAH), 345 to 367 (FRCE…MRKH), and 373 to 395 (HCCQ…MKVH). 2 disordered regions span residues 584–604 (HSTK…LESS) and 650–739 (SRVH…QQPA). The span at 594 to 604 (LPSKLDPLESS) shows a compositional bias: basic and acidic residues. The C2H2-type 7 zinc finger occupies 631-653 (TECPDCGRVFRTYHQVVVHSRVH). The span at 657 to 674 (RKGEEDGLHVGLDERRGS) shows a compositional bias: basic and acidic residues. A compositionally biased stretch (polar residues) spans 675 to 696 (GSDQESQSVSRSTTPGSSNVTE). C2H2-type zinc fingers lie at residues 751 to 773 (KDCP…LRIH) and 779 to 801 (YKCP…LERH). The interval 802 to 826 (HRERQNGAGPLSGQPPNQDHKDEMS) is disordered. A phosphoserine mark is found at serine 826 and serine 827. The span at 856–880 (SQQWTSGVLSSGDHSGQATGMSSEV) shows a compositional bias: polar residues. Disordered stretches follow at residues 856 to 893 (SQQW…LPSK), 937 to 985 (KDKA…PDAA), and 1124 to 1260 (SGAS…SLDK). Composition is skewed to basic and acidic residues over residues 950–972 (HGVD…EKSQ) and 1133–1143 (KEPDGKAHSEE). Composition is skewed to acidic residues over residues 1160–1170 (DLSDIASSEDM) and 1178–1187 (NDEEDVETEP). The segment covering 1194-1209 (LSALSKDSSSDGGDSL) has biased composition (low complexity).

The protein belongs to the krueppel C2H2-type zinc-finger protein family.

The protein localises to the nucleus. Its function is as follows. Transcriptional repressor that negatively regulates neuron differentiation by repressing retinoic acid-induced gene transcription. Binds and interrupts RARA from binding to retinoic acid response elements (RARE) composed of tandem 5'-AGGTCA-3' sites known as DR1-DR5. Recognizes and binds 2 copies of the core DNA sequence 5'-CCCCCA-3'. This Homo sapiens (Human) protein is Zinc finger protein 536 (ZNF536).